Reading from the N-terminus, the 90-residue chain is MSRTVFCARLQKDAEGLDFQLYPGDLGKRIFDNVSKEAWGQWQSKQTMLINEKKLNMMDPEHRKLLETEMVNFLFEGKDVVIDGYTPPSE.

This sequence belongs to the Fe(2+)-trafficking protein family.

Could be a mediator in iron transactions between iron acquisition and iron-requiring processes, such as synthesis and/or repair of Fe-S clusters in biosynthetic enzymes. The protein is Probable Fe(2+)-trafficking protein of Vibrio atlanticus (strain LGP32) (Vibrio splendidus (strain Mel32)).